We begin with the raw amino-acid sequence, 471 residues long: Tripartite motif-containing protein 60 (471 aa).

An RING-type zinc finger spans residues 16–57 (CPICLEYLKDPVTINCGHNFCRSCLSVSWKDLDDTFPCPVCR). The B box-type zinc-finger motif lies at 92-133 (KENAMCEKHNQFLTLFCVKDLEILCTQCSFSTKHQKHYICPI). Cys97, His100, Cys119, and His125 together coordinate Zn(2+). The stretch at 171–223 (ELKKKVEYKREEINSEFEQIRLFLQNEQEMILRQIQDEEMNILAKLNENLVEL) forms a coiled coil. Residues 277–470 (FSLPPQYSGL…LKICSVSDSE (194 aa)) form the B30.2/SPRY domain.

This sequence belongs to the TRIM/RBCC family.

Functionally, E3 SUMO-protein ligase that mediates SUMOylation of TAB2 leading to inhibition of NF-kappa-B and MAPK pathways by suppressing the TRAF6/TAB2/TAK1 complex. The polypeptide is Tripartite motif-containing protein 60 (TRIM60) (Homo sapiens (Human)).